A 438-amino-acid chain; its full sequence is MEGRLANMWRLTVNESKFVETALQSELRVDGRGLYDYRKLTIKFGKEYGSSEVQLGQTHVMGFVTAQLVQPYKDRPNEGSLSIFTEFSPMADPSFEPGRPGESAVELGRIIDRGLRESRAVDTESLCVLAGKMVWSVRIDLHILDNGGNLVDAANIAALAALMTFRRPDCTVGGENGQEVIIHPLEEREPLPLIIHHLPIAFTFGFFNKGNIVVMDPTYVEEAVMCGRMTVTVNANGDICAIQKPGEEGVNQSVILHCLRLASSRAAATTKIIREEVEAYNCERSLQKVKRHPTLAKSEVSGPTVAVKEEHRKSSDQERAAEISREHVERLKLSTEEVRSSKEEEAANFKGGPSNWDPYSEAMDVDSLKVSLASRGDPVTKSSSTKKMNGSGNAQKVGVEISVEEVTGELGKKDTKHKDGEMTLKDAVKPKKKRKNKS.

Disordered stretches follow at residues 293–322 and 334–438; these read PTLAKSEVSGPTVAVKEEHRKSSDQERAAE and STEE…KNKS. Basic and acidic residues-rich tracts occupy residues 307 to 322 and 334 to 347; these read VKEEHRKSSDQERAAE and STEEVRSSKEEEAA. A compositionally biased stretch (polar residues) spans 380–394; that stretch reads TKSSSTKKMNGSGNA. The span at 410 to 429 shows a compositional bias: basic and acidic residues; sequence LGKKDTKHKDGEMTLKDAVK.

It belongs to the RNase PH family.

The protein resides in the cytoplasm. Its subcellular location is the nucleus. Its function is as follows. Probable 3'-&gt;5' exoribonuclease involved in the regulation of cuticular wax biosynthesis by controlling the expression of CER3. May act by degrading a specific mRNA species encoding a negative regulator of CER3 transcription. Can perform exosomal functions and complement the yeast rrp45 null mutant. The polypeptide is Exosome complex component RRP45B (Arabidopsis thaliana (Mouse-ear cress)).